We begin with the raw amino-acid sequence, 245 residues long: Putative transport permease YvfS (245 aa).

The next 6 helical transmembrane spans lie at 20–40, 53–73, 103–123, 137–157, 164–184, and 214–234; these read YFVL…TNVV, HYLM…TLGI, IGQS…GAII, GLWI…IGLM, AGIS…WMPF, and GSPT…FMLL. Positions 20 to 242 constitute an ABC transmembrane type-2 domain; sequence YFVLWSLIMP…LLSKYIRRKQ (223 aa).

It belongs to the ABC-2 integral membrane protein family.

It is found in the cell membrane. In Bacillus subtilis (strain 168), this protein is Putative transport permease YvfS (yvfS).